A 318-amino-acid polypeptide reads, in one-letter code: Ribonuclease Z (318 aa).

Positions 62, 64, 66, 67, 144, 215, and 273 each coordinate Zn(2+). The Proton acceptor role is filled by Asp-66.

This sequence belongs to the RNase Z family. Homodimer. Requires Zn(2+) as cofactor.

The catalysed reaction is Endonucleolytic cleavage of RNA, removing extra 3' nucleotides from tRNA precursor, generating 3' termini of tRNAs. A 3'-hydroxy group is left at the tRNA terminus and a 5'-phosphoryl group is left at the trailer molecule.. Zinc phosphodiesterase, which displays some tRNA 3'-processing endonuclease activity. Probably involved in tRNA maturation, by removing a 3'-trailer from precursor tRNA. The chain is Ribonuclease Z from Prochlorococcus marinus (strain MIT 9313).